Consider the following 123-residue polypeptide: Large ribosomal subunit protein bL12 (123 aa).

Belongs to the bacterial ribosomal protein bL12 family. Homodimer. Part of the ribosomal stalk of the 50S ribosomal subunit. Forms a multimeric L10(L12)X complex, where L10 forms an elongated spine to which 2 to 4 L12 dimers bind in a sequential fashion. Binds GTP-bound translation factors.

In terms of biological role, forms part of the ribosomal stalk which helps the ribosome interact with GTP-bound translation factors. Is thus essential for accurate translation. The polypeptide is Large ribosomal subunit protein bL12 (Burkholderia vietnamiensis (strain G4 / LMG 22486) (Burkholderia cepacia (strain R1808))).